Reading from the N-terminus, the 228-residue chain is MSQSPIELKGSSFTLSVIHLHDSRPEVIRQALQEKVDQAPAFLKNAPVVINVATLPNGANWKDLQQAVTSAGLRIVGISGCQDERQKRAIARAGLPLLSEGKGQKMAPEPVVSPPENVPTKTRIINTPVRSGQQIYARNCDLIVISSVSAGAELIADGNIHIYGMMRGRALAGASGDAQCQIFCTHLGAELVSIAGQYWLSDQIPSDYFGQAARLHLLDNALTIQPLN.

It belongs to the MinC family. In terms of assembly, interacts with MinD and FtsZ.

Cell division inhibitor that blocks the formation of polar Z ring septums. Rapidly oscillates between the poles of the cell to destabilize FtsZ filaments that have formed before they mature into polar Z rings. Prevents FtsZ polymerization. This chain is Probable septum site-determining protein MinC, found in Yersinia enterocolitica serotype O:8 / biotype 1B (strain NCTC 13174 / 8081).